Reading from the N-terminus, the 238-residue chain is MRPSERAPDQLRAVTLETGVNRYAEGSCLIGFGHTKVLVTATVEENVPGWMRNKGAGWVTAEYGMLPRATHTRGRREAAAGKQTGRTQEIQRLIGRSLRAVVDLKALGERQITLDCDVVQADGGTRTAAITGAWVALRLATKYLLDEGVLKTDPILGQVAAVSCGVFNGVPVLDLDYEEDSNAEADSNFVLTGVGDIVEIQATGEKRGFTRAEFESLYGLAEKGINELFALQRAAIGG.

Phosphate is bound by residues arginine 86 and 124-126 (GTR).

It belongs to the RNase PH family. Homohexameric ring arranged as a trimer of dimers.

The catalysed reaction is tRNA(n+1) + phosphate = tRNA(n) + a ribonucleoside 5'-diphosphate. Phosphorolytic 3'-5' exoribonuclease that plays an important role in tRNA 3'-end maturation. Removes nucleotide residues following the 3'-CCA terminus of tRNAs; can also add nucleotides to the ends of RNA molecules by using nucleoside diphosphates as substrates, but this may not be physiologically important. Probably plays a role in initiation of 16S rRNA degradation (leading to ribosome degradation) during starvation. The polypeptide is Ribonuclease PH (Caulobacter vibrioides (strain ATCC 19089 / CIP 103742 / CB 15) (Caulobacter crescentus)).